The primary structure comprises 1007 residues: Probable inorganic carbon transporter subunit DabA (1007 aa).

Positions 442, 444, 696, and 711 each coordinate Zn(2+).

It belongs to the inorganic carbon transporter (TC 9.A.2) DabA family. In terms of assembly, forms a complex with DabB. The cofactor is Zn(2+).

It is found in the cell inner membrane. In terms of biological role, part of an energy-coupled inorganic carbon pump. The protein is Probable inorganic carbon transporter subunit DabA of Aquifex aeolicus (strain VF5).